The following is a 90-amino-acid chain: Mu-theraphotoxin-Phlo1b (90 aa).

Residues 1–22 form the signal peptide; it reads MKVSVLITLAVLGVMFVWTSAA. The propeptide occupies 23–50; sequence EQEDHGSDRRDSPALLKSLGRVFQSEER. Disulfide bonds link cysteine 52–cysteine 66, cysteine 59–cysteine 71, and cysteine 65–cysteine 79. Phenylalanine 85 is modified (phenylalanine amide). Residues 86–90 constitute a propeptide that is removed on maturation; the sequence is GNEKS.

Belongs to the neurotoxin 10 (Hwtx-1) family. 39 (Jztx-34) subfamily. As to expression, expressed by the venom gland.

The protein resides in the secreted. Its function is as follows. Gating-modifier toxin that inhibits voltage-gated sodium channel Nav by shifting the threshold for channel activation to more positive potentials. This toxin moderately inhibits human Nav1.7/SCN9A (IC(50)=360 nM) and weakly inhibits hNav1.2/SCN2A (37% inhibition at 1 uM peptide) and hNav1.5/SCN5A (&lt;20% inhibition at 1 uM peptide). Inhibition of Nav1.7 is voltage-dependent, with lower inhibition at more positive test pulses. This is Mu-theraphotoxin-Phlo1b from Phlogius sp. (Tarantula spider).